Consider the following 191-residue polypeptide: MLAIGITGSYASGKTFILNYLSAKGYKTFCADRCIKELYKDIVLQTQILKILPELEYFNIRKISNLIYNNDIAREKLQNFIYPLLIDKLILFKKENTNYKLAFSEIPLLYEAKFEQYFDFVVTIYCSEEIRMQRAITRAEFDINIYNKIKEIQLSQESKIAKADFSINSGVDMLDLEKQITKLIKDLECRV.

Positions 3-191 (AIGITGSYAS…KLIKDLECRV (189 aa)) constitute a DPCK domain. 11–16 (ASGKTF) contributes to the ATP binding site.

It belongs to the CoaE family.

The protein localises to the cytoplasm. It carries out the reaction 3'-dephospho-CoA + ATP = ADP + CoA + H(+). Its pathway is cofactor biosynthesis; coenzyme A biosynthesis; CoA from (R)-pantothenate: step 5/5. Catalyzes the phosphorylation of the 3'-hydroxyl group of dephosphocoenzyme A to form coenzyme A. This Rickettsia prowazekii (strain Madrid E) protein is Dephospho-CoA kinase.